The sequence spans 614 residues: Elongation factor 4 (614 aa).

One can recognise a tr-type G domain in the interval 10–192 (ALIRNFCIIA…EIVARIPPPV (183 aa)). GTP is bound by residues 22–27 (DHGKST) and 139–142 (NKID).

It belongs to the TRAFAC class translation factor GTPase superfamily. Classic translation factor GTPase family. LepA subfamily.

The protein localises to the cell membrane. It carries out the reaction GTP + H2O = GDP + phosphate + H(+). Required for accurate and efficient protein synthesis under certain stress conditions. May act as a fidelity factor of the translation reaction, by catalyzing a one-codon backward translocation of tRNAs on improperly translocated ribosomes. Back-translocation proceeds from a post-translocation (POST) complex to a pre-translocation (PRE) complex, thus giving elongation factor G a second chance to translocate the tRNAs correctly. Binds to ribosomes in a GTP-dependent manner. The protein is Elongation factor 4 of Thermobifida fusca (strain YX).